The sequence spans 72 residues: Conotoxin VnMKLT2-0221 (72 aa).

Residues 1–22 (MKLTCVLIVAVLFLTACQLTTA) form the signal peptide. Residues 23–45 (ASYARSERQHPDLGSSDQNSKLT) constitute a propeptide that is removed on maturation. A disordered region spans residues 26–45 (ARSERQHPDLGSSDQNSKLT). Intrachain disulfides connect C48/C62, C55/C66, and C61/C71.

The protein belongs to the conotoxin O1 superfamily. As to expression, expressed by the venom duct.

It localises to the secreted. This Conus ventricosus (Mediterranean cone) protein is Conotoxin VnMKLT2-0221.